A 551-amino-acid chain; its full sequence is Tetrachloroethene reductive dehalogenase (551 aa).

The tat-type signal signal peptide spans 1 to 39 (MGEINRRNFLKASMLGAAAAAVASASAVKGMVSPLVADA). The 4Fe-4S ferredoxin-type 1 domain occupies 411–440 (PRKFGVREFCRLCKKCADACPAQAISHEKD). Positions 420, 423, 426, 430, 467, 478, 481, and 485 each coordinate [4Fe-4S] cluster. The 19-residue stretch at 478–496 (CANCVAVCSWNKVETWNHD) folds into the 4Fe-4S ferredoxin-type 2 domain.

This sequence belongs to the PceA family. In terms of assembly, monomer. It depends on [4Fe-4S] cluster as a cofactor. The cofactor is corrinoid. In terms of processing, predicted to be exported by the Tat system. The position of the signal peptide cleavage has been experimentally proven.

It localises to the cell membrane. The catalysed reaction is trichloroethene + chloride + A + H(+) = tetrachloroethene + AH2. The enzyme catalyses trichloroethene + AH2 = (Z)-1,2-dichloroethene + chloride + A + H(+). Activity is inhibited by ammonium ions. Photoreversibly inactivated by 1-iodopropane. Functionally, catalyzes the reductive dechlorination of tetrachloroethene (PCE) to trichloroethene (TCE) and of trichloroethene to cis-1,2-dichloroethene (DCE). Can also use trichlorofluoroethene, tetrachloromethane, hexachloroethane, tetrachloroethane, trichloroethane and 1,1,1-trichloro-2,2,2-trifluoroethane. Menaquinone can act as the electron donor. Reduced methyl viologen can act as the artificial electron donor. The sequence is that of Tetrachloroethene reductive dehalogenase from Dehalobacter restrictus (strain DSM 9455 / PER-K23).